The primary structure comprises 292 residues: Glycine--tRNA ligase alpha subunit (292 aa).

It belongs to the class-II aminoacyl-tRNA synthetase family. As to quaternary structure, tetramer of two alpha and two beta subunits.

It is found in the cytoplasm. It catalyses the reaction tRNA(Gly) + glycine + ATP = glycyl-tRNA(Gly) + AMP + diphosphate. The chain is Glycine--tRNA ligase alpha subunit from Clostridioides difficile (strain 630) (Peptoclostridium difficile).